The chain runs to 90 residues: Small ribosomal subunit protein bS16 (90 aa).

It belongs to the bacterial ribosomal protein bS16 family.

The chain is Small ribosomal subunit protein bS16 from Streptococcus pneumoniae serotype 19F (strain G54).